We begin with the raw amino-acid sequence, 371 residues long: Putrescine N-methyltransferase 2 (371 aa).

2 stretches are compositionally biased toward polar residues: residues 1 to 14 (MEVISTNTNGSTIF) and 23 to 70 (GHQN…HDNG). The segment at 1 to 70 (MEVISTNTNG…QNGTISHDNG (70 aa)) is disordered. Residues 82–319 (PGWFSEFSAL…GVIGYMLCST (238 aa)) form the PABS domain. S-adenosyl-L-methionine is bound by residues Gln-113, Glu-188, and 219-220 (DG). Asp-238 acts as the Proton acceptor in catalysis. Position 307 (Tyr-307) interacts with S-adenosyl-L-methionine.

The protein belongs to the class I-like SAM-binding methyltransferase superfamily. Spermidine/spermine synthase family. As to expression, mainly expressed in roots.

It catalyses the reaction putrescine + S-adenosyl-L-methionine = N-methylputrescine + S-adenosyl-L-homocysteine + H(+). It participates in alkaloid biosynthesis; nicotine biosynthesis. Involved in the biosynthesis of pyridine alkaloid natural products, leading mainly to the production of anabasine, anatabine, nicotine and nornicotine, effective deterrents against herbivores with antiparasitic and pesticide properties (neurotoxins); nornicotine serves as the precursor in the synthesis of the carcinogen compound N'-nitrosonornicotine (NNN). Methyltransferase that mediates the conversion of putrescine to N-methylputrescine. This is Putrescine N-methyltransferase 2 from Nicotiana attenuata (Coyote tobacco).